Here is a 263-residue protein sequence, read N- to C-terminus: MGWLDFSSKSKKEEKDDTRPSFTWGDNLNATDWQHYTDPRTVIPTILLTTTILVSTRLYRSYLRRIPEAAYIRPGFFRKRSLFGTVTRVGDADNFHLFHTPGGRLAGWGWMPGRKKLPEGKDLKNKTIHVRIAGVDAPEGAHFGKPAQPFSAEALAWLREYIQNRRVRAYIYKRDQYDRVVATVWVRRFLVRKDVGKEMLRAGMATVYEAKMGAEFGDFEAQYRAIEEEAKKKKLGMWSGKKKDYESPRDYKTRTANAAKMLK.

Residues 1–21 (MGWLDFSSKSKKEEKDDTRPS) form a disordered region. Residues 8–19 (SKSKKEEKDDTR) are compositionally biased toward basic and acidic residues. The helical transmembrane segment at 41 to 59 (TVIPTILLTTTILVSTRLY) threads the bilayer. One can recognise a TNase-like domain in the interval 80-240 (RSLFGTVTRV…KKKKLGMWSG (161 aa)). R131 is an active-site residue. Ca(2+) is bound at residue D136. Catalysis depends on residues E139 and R179. The tract at residues 236–263 (GMWSGKKKDYESPRDYKTRTANAAKMLK) is disordered. A compositionally biased stretch (basic and acidic residues) spans 241 to 253 (KKKDYESPRDYKT).

This sequence belongs to the LCL3 family.

Its subcellular location is the mitochondrion. The protein localises to the membrane. The sequence is that of Probable endonuclease lcl3 (lcl3) from Botryotinia fuckeliana (strain B05.10) (Noble rot fungus).